The primary structure comprises 450 residues: Probable glycine dehydrogenase (decarboxylating) subunit 1 (450 aa).

Belongs to the GcvP family. N-terminal subunit subfamily. As to quaternary structure, the glycine cleavage system is composed of four proteins: P, T, L and H. In this organism, the P 'protein' is a heterodimer of two subunits.

The enzyme catalyses N(6)-[(R)-lipoyl]-L-lysyl-[glycine-cleavage complex H protein] + glycine + H(+) = N(6)-[(R)-S(8)-aminomethyldihydrolipoyl]-L-lysyl-[glycine-cleavage complex H protein] + CO2. In terms of biological role, the glycine cleavage system catalyzes the degradation of glycine. The P protein binds the alpha-amino group of glycine through its pyridoxal phosphate cofactor; CO(2) is released and the remaining methylamine moiety is then transferred to the lipoamide cofactor of the H protein. The protein is Probable glycine dehydrogenase (decarboxylating) subunit 1 of Brevibacillus brevis (strain 47 / JCM 6285 / NBRC 100599).